The primary structure comprises 100 residues: MARKSLIQREKKRQKLEQKYHLIRQSLKNEISKVPSLSEKWEIHGKLQSPPRNSAPTRLHRRCFLTGRPRANYRDFGLSGHILREMVHACLLPGATRSSW.

The protein belongs to the universal ribosomal protein uS14 family. Part of the 30S ribosomal subunit.

The protein resides in the plastid. Its subcellular location is the chloroplast. In terms of biological role, binds 16S rRNA, required for the assembly of 30S particles. In Cucumis sativus (Cucumber), this protein is Small ribosomal subunit protein uS14c.